A 447-amino-acid chain; its full sequence is MTSSSPRNEALFDRARQLMPGGVNSPVRAFGSVGGTPRFMVSAKGAYLTDADGAEYVDLVCSWGPALLGHAHPAVLEAVHAAVDRGLSFGASTPDEANLAAIVKERVPAAERVRMVSTGTEATMTAIRLARGFTGRDLVIKFAGCYHGHLDGLLAAAGSGVATLALPGSAGVTAATAAETLVLPYNDLAAVEAAFAAHGSNIAAVITEAAPANMGVVTPGEGFNAGLSRITREHGALLIVDEVLTGFRTGYSGYWGLTGGAADAAEPWSPDLLTFGKVIGGGMPTAALGGRADIMDYLAPLGPVYQAGTLSGNPVAMAAGVATLAHATPEVYSFIDARSLELSAALSSALDAAGVDHSIQRAGNLFSVAFGTSARGVHNYDDAQGQEVFRYAPFFHSMLDSGVYLPPSVFEAWFLSAAHDDAAMNRIFDALPAAARAAASAAVPAGL.

Residue Lys277 is modified to N6-(pyridoxal phosphate)lysine.

The protein belongs to the class-III pyridoxal-phosphate-dependent aminotransferase family. HemL subfamily. In terms of assembly, homodimer. Requires pyridoxal 5'-phosphate as cofactor.

It localises to the cytoplasm. The enzyme catalyses (S)-4-amino-5-oxopentanoate = 5-aminolevulinate. It participates in porphyrin-containing compound metabolism; protoporphyrin-IX biosynthesis; 5-aminolevulinate from L-glutamyl-tRNA(Glu): step 2/2. The protein is Glutamate-1-semialdehyde 2,1-aminomutase of Arthrobacter sp. (strain FB24).